The sequence spans 107 residues: Large ribosomal subunit protein eL21 (107 aa).

It belongs to the eukaryotic ribosomal protein eL21 family.

The chain is Large ribosomal subunit protein eL21 (rpl21e) from Aeropyrum pernix (strain ATCC 700893 / DSM 11879 / JCM 9820 / NBRC 100138 / K1).